The following is a 258-amino-acid chain: 5'-nucleotidase SurE (258 aa).

4 residues coordinate a divalent metal cation: Asp14, Asp15, Ser45, and Asn101.

The protein belongs to the SurE nucleotidase family. Requires a divalent metal cation as cofactor.

The protein resides in the cytoplasm. It carries out the reaction a ribonucleoside 5'-phosphate + H2O = a ribonucleoside + phosphate. Nucleotidase that shows phosphatase activity on nucleoside 5'-monophosphates. This Chlorobium phaeobacteroides (strain DSM 266 / SMG 266 / 2430) protein is 5'-nucleotidase SurE.